A 592-amino-acid chain; its full sequence is Sodium- and chloride-dependent transporter XTRP3 (592 aa).

Topologically, residues 1–5 (MEKAR) are cytoplasmic. A helical membrane pass occupies residues 6–26 (PLWANSLQFVFACISYAVGLG). The Extracellular portion of the chain corresponds to 27 to 42 (NVWRFPYLCQMYGGGS). Residues 43-63 (FLVPYIIMLIVEGMPLLYLEL) form a helical membrane-spanning segment. Topologically, residues 64–79 (AVGQRMRQGSIGAWRT) are cytoplasmic. The helical transmembrane segment at 80 to 100 (ISPYLSGVGVASVVVSFFLSM) threads the bilayer. Topologically, residues 101–165 (YYNVINAWAF…ISPSLQENGG (65 aa)) are extracellular. Asn131 carries N-linked (GlcNAc...) asparagine glycosylation. A helical membrane pass occupies residues 166-186 (VQWEPALCLLLAWLVVYLCIL). The Cytoplasmic segment spans residues 187–194 (RGTESTGK). The helical transmembrane segment at 195–215 (VVYFTASLPYCVLIIYLIRGL) threads the bilayer. The Extracellular segment spans residues 216-241 (TLHGATNGLMYMFTPKIEQLANPKAW). The chain crosses the membrane as a helical span at residues 242–262 (INAATQIFFSLGLGFGSLIAF). At 263–276 (ASYNEPSNNCQKHA) the chain is on the cytoplasmic side. The chain crosses the membrane as a helical span at residues 277–297 (IIVSLINSFTSIFASIVTFSI). The Extracellular segment spans residues 298 to 389 (YGFKATFNYE…EAIKNMEVSQ (92 aa)). Residue Asn357 is glycosylated (N-linked (GlcNAc...) asparagine). The helical transmembrane segment at 390–410 (LWSVLYFFMLLMLGIGSMLGN) threads the bilayer. At 411 to 431 (TAAILTPLTDSKIISSHLPKE) the chain is on the cytoplasmic side. The helical transmembrane segment at 432 to 452 (AISGLVCLVNCAIGMVFTMEA) threads the bilayer. Residues 453–465 (GNYWFDIFNDYAA) lie on the Extracellular side of the membrane. The helical transmembrane segment at 466–486 (TLSLLLIVLVETIAVCYVYGL) threads the bilayer. Residues 487-504 (RRFESDLKAMTGRAVSWY) are Cytoplasmic-facing. The chain crosses the membrane as a helical span at residues 505–525 (WKVMWAGVSPLLIVSLFVFYL). Residues 526–554 (SDYILTGTLKYQAWDASQGQLVTKDYPAY) are Extracellular-facing. Residues 555-575 (ALAVIGLLVASSTMCIPLAAL) form a helical membrane-spanning segment. Over 576–592 (GTFVQRRLKRGDADPVA) the chain is Cytoplasmic.

The protein belongs to the sodium:neurotransmitter symporter (SNF) (TC 2.A.22) family. SLC6A20 subfamily. Kidney and small intestine. Expressed in the S3 segment of the proximal tubule. Expressed in neurons.

Its subcellular location is the apical cell membrane. It carries out the reaction L-proline(out) + chloride(out) + 2 Na(+)(out) = L-proline(in) + chloride(in) + 2 Na(+)(in). It catalyses the reaction L-pipecolate(out) + chloride(out) + 2 Na(+)(out) = L-pipecolate(in) + chloride(in) + 2 Na(+)(in). The catalysed reaction is sarcosine(out) + chloride(out) + 2 Na(+)(out) = sarcosine(in) + chloride(in) + 2 Na(+)(in). The enzyme catalyses N-methyl-L-proline(out) + chloride(out) + 2 Na(+)(out) = N-methyl-L-proline(in) + chloride(in) + 2 Na(+)(in). It carries out the reaction 2-methyl-2-(methylamino)propanoate(out) + chloride(out) + 2 Na(+)(out) = 2-methyl-2-(methylamino)propanoate(in) + chloride(in) + 2 Na(+)(in). It catalyses the reaction glycine betaine(out) + chloride(out) + 2 Na(+)(out) = glycine betaine(in) + chloride(in) + 2 Na(+)(in). The catalysed reaction is glycine(out) + chloride(out) + 2 Na(+)(out) = glycine(in) + chloride(in) + 2 Na(+)(in). Mediates the Na(+)- and Cl(-)-dependent uptake of imino acids such as L-proline, N-methyl-L-proline and pipecolate as well as N-methylated amino acids. Also transports glycine, regulates proline and glycine homeostasis in the brain playing a role in the modulation of NMDAR currents. The polypeptide is Sodium- and chloride-dependent transporter XTRP3 (Homo sapiens (Human)).